Reading from the N-terminus, the 484-residue chain is E-selectin (484 aa).

The first 22 residues, 1–22, serve as a signal peptide directing secretion; sequence MIASQFLSALPLVLLLLRESGA. One can recognise a C-type lectin domain in the interval 23-140; sequence WSYSASTETM…CSKKKLALCY (118 aa). Residues 23–429 lie on the Extracellular side of the membrane; the sequence is WSYSASTETM…CEAPAESKIP (407 aa). Cystine bridges form between C41–C139, C112–C131, C144–C155, C149–C164, C166–C175, C181–C222, C194–C204, C208–C235, C240–C285, C271–C298, C303–C348, C334–C361, C366–C407, and C393–C420. N61, N65, and N79 each carry an N-linked (GlcNAc...) asparagine glycan. Ca(2+) contacts are provided by E102, N104, and E110. Residues 102-110, 114-119, and 127-129 contribute to the a carbohydrate site; these read EPNNKQSNE, EIYIKR, and NDE. The Ca(2+) site is built by N127 and D128. Residues 141–176 enclose the EGF-like domain; sequence TAACTPTSCSGHGECIETINSSTCQCYPGFRGLQCE. An N-linked (GlcNAc...) asparagine glycan is attached at N160. Sushi domains follow at residues 179-237, 251-300, 301-363, and 364-422; these read VECD…TCKA, VSCN…VCKA, VKCP…SCQV, and VQCS…TCEA. N-linked (GlcNAc...) asparagine glycosylation occurs at N201. N-linked (GlcNAc...) asparagine glycosylation is present at N254. N376 and N400 each carry an N-linked (GlcNAc...) asparagine glycan. Residues 430-451 traverse the membrane as a helical segment; it reads LAMGLAAGGVSFMTSASFLLWL. Residues 452 to 484 lie on the Cytoplasmic side of the membrane; it reads LKRLRKRAKKFVPSSSSECLQPNGSYQMPSDLI.

This sequence belongs to the selectin/LECAM family. In terms of assembly, interacts with SELPLG/PSGL1 and PODXL2 through the sialyl Lewis X epitope. SELPLG sulfation appears not to be required for this interaction.

The protein resides in the cell membrane. In terms of biological role, cell-surface glycoprotein having a role in immunoadhesion. Mediates in the adhesion of blood neutrophils in cytokine-activated endothelium through interaction with SELPLG/PSGL1. May have a role in capillary morphogenesis. The sequence is that of E-selectin (SELE) from Sus scrofa (Pig).